The chain runs to 156 residues: Arginine repressor (156 aa).

The protein belongs to the ArgR family.

Its subcellular location is the cytoplasm. The protein operates within amino-acid biosynthesis; L-arginine biosynthesis [regulation]. Regulates arginine biosynthesis genes. The polypeptide is Arginine repressor (Vibrio cholerae serotype O1 (strain ATCC 39315 / El Tor Inaba N16961)).